Here is a 524-residue protein sequence, read N- to C-terminus: Glucose-6-phosphate isomerase (524 aa).

The active-site Proton donor is the E346. Catalysis depends on residues H377 and K492.

This sequence belongs to the GPI family.

Its subcellular location is the cytoplasm. It catalyses the reaction alpha-D-glucose 6-phosphate = beta-D-fructose 6-phosphate. Its pathway is carbohydrate biosynthesis; gluconeogenesis. It functions in the pathway carbohydrate degradation; glycolysis; D-glyceraldehyde 3-phosphate and glycerone phosphate from D-glucose: step 2/4. Functionally, catalyzes the reversible isomerization of glucose-6-phosphate to fructose-6-phosphate. This Chlamydia trachomatis serovar A (strain ATCC VR-571B / DSM 19440 / HAR-13) protein is Glucose-6-phosphate isomerase.